Consider the following 357-residue polypeptide: Glutamate 5-kinase (357 aa).

ATP is bound at residue Lys-7. Residues Ser-43, Asp-130, and Asn-142 each contribute to the substrate site. Residues 162–163 (TD) and 205–211 (TGGMTTK) contribute to the ATP site. Residues 270–353 (EGELQLDAGA…PVVVHRDGLV (84 aa)) form the PUA domain.

Belongs to the glutamate 5-kinase family.

The protein resides in the cytoplasm. It carries out the reaction L-glutamate + ATP = L-glutamyl 5-phosphate + ADP. It participates in amino-acid biosynthesis; L-proline biosynthesis; L-glutamate 5-semialdehyde from L-glutamate: step 1/2. Functionally, catalyzes the transfer of a phosphate group to glutamate to form L-glutamate 5-phosphate. The polypeptide is Glutamate 5-kinase (Synechococcus sp. (strain CC9605)).